Consider the following 93-residue polypeptide: Small ribosomal subunit protein uS19 (93 aa).

The protein belongs to the universal ribosomal protein uS19 family.

In terms of biological role, protein S19 forms a complex with S13 that binds strongly to the 16S ribosomal RNA. The sequence is that of Small ribosomal subunit protein uS19 from Alkaliphilus metalliredigens (strain QYMF).